The chain runs to 189 residues: uncharacterized protein (189 aa).

This sequence belongs to the isochorismatase family.

This is an uncharacterized protein from Bacillus subtilis (strain 168).